The following is a 495-amino-acid chain: MSTRKVSYFYDNEVGNHYYGPNHPMKPHRMRMTHDLVLNYGIYKKMQIFRPRKASELELTNFHSDDYINFLKLVTPDNMHDYSKQLVKFNVREDCPVFDGMYNFCQISSGGSIGCAVKVNSKESDVAINWAGGLHHAKKSEASGFCYTNDIVLSILELLKHHERVLYIDIDIHHGDGVEEAFYTTDRVMTVSFHKYGDYFPGTGDVKDIGADKGKYYSLNFPLKDGIDDESYQSIFRPIIRSVMDFYRPGAVVIQCGADSLTGDRLGCFNLTLRGHAQCIEFLKSFNVPLVVLGGGGYTIKNVARCWTYETSILVDSELKDELPYNDYLEYYGPEYRLHITPNNMENQNTKDYLEKLKIQLLENLRNLNHAPAAAHHDIPPDSFNYSDDEDDEDPDVRISEADRDKKVHHQGELSDSDEEDGRRNYSNGLEATSTSRRNQVSISAYDKERPSYNSRNNNNNNNNNNNNNNNNNNNSNNNNSHHHNEDADVDMDSG.

Position 94 (Asp-94) interacts with substrate. His-136 acts as the Proton acceptor in catalysis. Position 144 (Gly-144) interacts with substrate. Asp-171, His-173, and Asp-259 together coordinate a divalent metal cation. Substrate is bound at residue Tyr-298. The disordered stretch occupies residues Pro-372–Gly-495. Positions Asp-396–Glu-413 are enriched in basic and acidic residues. Polar residues predominate over residues Asn-425–Ile-443. The span at Asn-454 to Asn-480 shows a compositional bias: low complexity.

It belongs to the histone deacetylase family. HD type 1 subfamily.

The protein resides in the nucleus. The protein localises to the cytoplasm. It catalyses the reaction N(6)-acetyl-L-lysyl-[histone] + H2O = L-lysyl-[histone] + acetate. In terms of biological role, responsible for the deacetylation of lysine residues on the N-terminal part of the core histones (H2A, H2B, H3 and H4). Histone deacetylation plays an important role in transcriptional regulation, cell cycle progression and developmental events. Histone deacetylases act via the formation of large multiprotein complexes. This Dictyostelium discoideum (Social amoeba) protein is Type-1 histone deacetylase 1 (hdaA).